The primary structure comprises 577 residues: Probable cytochrome c biosynthesis protein (577 aa).

Belongs to the CcmF/CycK/Ccl1/NrfE/CcsA family.

The protein resides in the mitochondrion. Could be involved in assembly and maturation of cytochromes c. May play a role in guidance of apocytochromes and heme groups for the covalent linkage introduced by the cytochrome-c-heme lyase. This chain is Probable cytochrome c biosynthesis protein, found in Oenothera berteroana (Bertero's evening primrose).